We begin with the raw amino-acid sequence, 2017 residues long: Protein cbp-1 (2017 aa).

Basic and acidic residues predominate over residues 1-13; that stretch reads MDEPPSKKSRADS. The tract at residues 1-182 is disordered; it reads MDEPPSKKSR…PGMFQGDQQQ (182 aa). Low complexity-rich tracts occupy residues 21–30 and 78–90; these read ALSALESLEA and QPGQ…PPQN. Residues 106–116 are compositionally biased toward polar residues; sequence NPSQTSNNSPR. The segment covering 141–151 has biased composition (low complexity); it reads MMSPPSMGRVP. Positions 152 to 164 are enriched in pro residues; that stretch reads GPSPGGPQPPGPG. A compositionally biased stretch (low complexity) spans 165 to 182; the sequence is QPQMRPGQPGMFQGDQQQ. Arg-234 is subject to Symmetric dimethylarginine; by PRMT5; in vitro. The segment at 307–398 is disordered; the sequence is SNGQPIRGPN…PGSSMLATHQ (92 aa). Over residues 340-379 the composition is skewed to low complexity; the sequence is QAAAAQHAAQQQAAAQAQAQAAAQQQQQQQREQEAAAAAQ. The TAZ-type 1 zinc-finger motif lies at 399–505; the sequence is DPEKRKLIQQ…REDCPVCKPL (107 aa). 2 disordered regions span residues 558–593 and 706–864; these read EGFN…DMPD and GRSD…DTVF. Residues 559–573 show a composition bias toward low complexity; sequence GFNGNPFQNGPNRGG. One can recognise a KIX domain in the interval 593–672; the sequence is DCTKEWHHQV…KIYKIQKELQ (80 aa). The segment covering 721 to 773 has biased composition (polar residues); sequence PSQQNQPWGGAPNSNMHQQIPPNGQVPQVNNSSTFPSSGNSTPNIGASSTVSA. The span at 834 to 854 shows a compositional bias: basic and acidic residues; that stretch reads KDTKDGVAESKPKEQQAKREP. Residues 864–970 enclose the Bromo domain; that stretch reads FSQEDLIKFL…EMFVSEMDPV (107 aa). Interaction with histone regions lie at residues 902–948 and 1224–1226; these read DYHE…YNRK and YLD. The CBP/p300-type HAT domain maps to 1112 to 1492; that stretch reads KYLASKLPHN…LAYSLHETDS (381 aa). Acetyl-CoA is bound by residues 1225-1227, 1237-1238, Ile-1284, Arg-1289, and Trp-1293; these read LDS and RT. A compositionally biased stretch (basic and acidic residues) spans 1349 to 1358; the sequence is NEEAQRKVKE. Residues 1349 to 1401 form a disordered region; it reads NEEAQRKVKEDDDDGEDADGGLGGGDSGKKKSSKNKKNNLKKNAKMNKKKAGS. The span at 1378–1399 shows a compositional bias: basic residues; the sequence is KKSSKNKKNNLKKNAKMNKKKA. The ZZ-type zinc-finger motif lies at 1494–1540; sequence GMEYTCNKCSSPAVWHCQSCDDFDLCDGCKPTTQHPHEMEKIKSLIG. Positions 1499, 1502, 1510, 1513, 1519, 1522, 1528, and 1530 each coordinate Zn(2+). Residues 1550 to 1631 form a TAZ-type 2 zinc finger; it reads GGTRYESIQR…ACTVPFCMNI (82 aa). Disordered stretches follow at residues 1656 to 1828 and 1908 to 2017; these read GLQS…QPVR and SQMS…AGGQ. A compositionally biased stretch (polar residues) spans 1667-1678; that stretch reads TPSTVSNGTPSN. Over residues 1699–1708 the composition is skewed to low complexity; sequence QVQMQQHQGS. Residues 1748–1757 show a composition bias toward polar residues; the sequence is PQMNANQSRY. Composition is skewed to low complexity over residues 1793 to 1812 and 1908 to 1932; these read MNPQ…QNPG and SQMS…QAGA. Positions 1943–1962 are enriched in polar residues; that stretch reads QNNSQPRAPSGQFASMNPSM. Residues 1963–2017 show a composition bias toward low complexity; it reads QQQYPQQQQGWPQQRQQNPGGMQQNANPYNQFQNRQNMMMMPQQQQPHPSNAGGQ.

Interacts (via N-terminus domain and HAT domain) with prmt-5; the interaction results in methylation of cbp-1. Interacts (via HAT domain) with cep-1; cep-1 transcriptional activity may be inhibited by interaction with methylated cbp-1. Component of a complex that contains prmt-5 and cbp-1. In terms of processing, methylation by prmt-5 may repress the capacity of cbp-1 to enhance cep-1-dependent transcription of egl-1.

The protein localises to the nucleus. The catalysed reaction is L-lysyl-[protein] + acetyl-CoA = N(6)-acetyl-L-lysyl-[protein] + CoA + H(+). Its function is as follows. Acetyltransferase enzyme. Acetylates histones, giving a specific tag for transcriptional activation. May prevent DNA damage-induced apoptosis by inhibiting cep-1-dependent transcription activation of the programmed cell death activator egl-1. In differentiated cells, negatively regulates localization of heterochromatin to the nuclear periphery. Plays a role in migration of gonadal distal tip cells, where it probably modulates expression of genes involved in integrin-mediated adhesion. This Caenorhabditis elegans protein is Protein cbp-1 (cbp-1).